A 141-amino-acid polypeptide reads, in one-letter code: Hemoglobin subunit alpha-2 (141 aa).

The region spanning 1–141 (VLSPADKNNV…VSTVLTSKYR (141 aa)) is the Globin domain. Histidine 58 is an O2 binding site. Position 87 (histidine 87) interacts with heme b.

The protein belongs to the globin family. As to quaternary structure, heterotetramer of two alpha chains and two beta chains. Red blood cells.

Its function is as follows. Involved in oxygen transport from the lung to the various peripheral tissues. The sequence is that of Hemoglobin subunit alpha-2 from Varecia variegata (Black-and-white ruffed lemur).